We begin with the raw amino-acid sequence, 343 residues long: MSYPERKRKRSRWSKPHSTQNPSPSLPDDVLLSIFARVSRLYYPTLSHVSESFRSLLASPELYKARSLSGNTEICLYVCLRCSTGYRWFSLSRKPDQTLTYEERKSSGYALARVPIPGGSPNVRSSSLVAVGSDIYNICGSINKASSSSSVSILDCQSHTWREAPSLPVELSSISASVRDGNQGGHGYSDSRKNSFKVFAYNSKEGRWDHLVGLGAGSFMLPDSYCVIDNVSYSVSDGMFRWYDTEVRRWKDLRGLFQLPKFSAGACVILADYGGKMAVLWDQLPYHHGFHKTIQCAVIALERRTSFVFREKSCQIWGKVEWVDDLLTVPTSYDLVKVLVATL.

The span at 1 to 15 (MSYPERKRKRSRWSK) shows a compositional bias: basic residues. A disordered region spans residues 1–25 (MSYPERKRKRSRWSKPHSTQNPSPS). One can recognise an F-box domain in the interval 20 to 66 (QNPSPSLPDDVLLSIFARVSRLYYPTLSHVSESFRSLLASPELYKAR). Kelch repeat units follow at residues 134–181 (DIYN…VRDG), 183–224 (QGGH…LPDS), and 225–271 (YCVI…VILA).

In Arabidopsis thaliana (Mouse-ear cress), this protein is F-box/kelch-repeat protein At3g08810.